The primary structure comprises 911 residues: Desmoglein-1-gamma (911 aa).

Residues 1–23 form the signal peptide; sequence MDWHSFRIAALLLTSLVVLEVNS. Positions 24 to 49 are excised as a propeptide; it reads EFQIQVRDHNAKNGTIKWHSIRRQKR. Cadherin domains lie at 50-157, 158-269, and 270-389; these read EWIK…PPVF, SMTT…IPYL, and EQSS…QPGS. Over 50–519 the chain is Extracellular; that stretch reads EWIKFAAACR…PNVDNVHFGP (470 aa). Asn110 is a glycosylation site (N-linked (GlcNAc...) (high mannose) asparagine). N-linked (GlcNAc...) asparagine glycosylation is present at Asn180. A glycan (N-linked (GlcNAc...) asparagine) is linked at Asn401. Residues 520-540 form a helical membrane-spanning segment; the sequence is AGIGLLIMGFLVLGLVPFLLI. Topologically, residues 541–911 are cytoplasmic; sequence SCDCGGAPGG…GMIGNLSIPP (371 aa). Desmoglein repeat repeat units lie at residues 783 to 809, 810 to 839, 840 to 869, and 870 to 897; these read AYPSGPGVQHPMLIPDPLGYGNITVRE, SYTTSGTLKPSVHFHDNQQASNVVVTERVV, GPISGADLHGMLEIPALRDGTNVIVTERVI, and APGSSLPNSLTIPNPRETSNVVVTERVI. Residues 898–911 form a Desmoglein repeat 5; truncated repeat; the sequence is QPTSGMIGNLSIPP.

As to quaternary structure, interacts with DSC3; there is evidence to suggest that the interaction promotes cell-cell adhesion of keratinocytes. In terms of tissue distribution, expressed in epidermis, brain, liver, skeletal, muscle and testis.

It localises to the cell membrane. The protein resides in the cell junction. Its subcellular location is the desmosome. The protein localises to the cytoplasm. It is found in the nucleus. Its function is as follows. Component of intercellular desmosome junctions. Involved in the interaction of plaque proteins and intermediate filaments mediating cell-cell adhesion. The protein is Desmoglein-1-gamma (Dsg1c) of Mus musculus (Mouse).